The sequence spans 244 residues: ATP synthase subunit b 2 (244 aa).

The helical transmembrane segment at 2–22 (LIDWFTIVAQIINFLILVFLL) threads the bilayer.

The protein belongs to the ATPase B chain family. As to quaternary structure, F-type ATPases have 2 components, F(1) - the catalytic core - and F(0) - the membrane proton channel. F(1) has five subunits: alpha(3), beta(3), gamma(1), delta(1), epsilon(1). F(0) has four main subunits: a(1), b(1), b'(1) and c(10-14). The alpha and beta chains form an alternating ring which encloses part of the gamma chain. F(1) is attached to F(0) by a central stalk formed by the gamma and epsilon chains, while a peripheral stalk is formed by the delta, b and b' chains.

It is found in the cellular thylakoid membrane. In terms of biological role, f(1)F(0) ATP synthase produces ATP from ADP in the presence of a proton or sodium gradient. F-type ATPases consist of two structural domains, F(1) containing the extramembraneous catalytic core and F(0) containing the membrane proton channel, linked together by a central stalk and a peripheral stalk. During catalysis, ATP synthesis in the catalytic domain of F(1) is coupled via a rotary mechanism of the central stalk subunits to proton translocation. Functionally, component of the F(0) channel, it forms part of the peripheral stalk, linking F(1) to F(0). In Crocosphaera subtropica (strain ATCC 51142 / BH68) (Cyanothece sp. (strain ATCC 51142)), this protein is ATP synthase subunit b 2.